We begin with the raw amino-acid sequence, 540 residues long: Ribonuclease Y (540 aa).

A helical transmembrane segment spans residues 4 to 24; the sequence is TILVPVAVAIVSVLVGGCAGY. Positions 230–293 constitute a KH domain; sequence TVSVVNLPND…EIAKRALERL (64 aa). In terms of domain architecture, HD spans 356-449; sequence VLSHSIEVGK…VVAADTISSA (94 aa).

It belongs to the RNase Y family.

Its subcellular location is the cell membrane. Endoribonuclease that initiates mRNA decay. The chain is Ribonuclease Y from Lactobacillus gasseri (strain ATCC 33323 / DSM 20243 / BCRC 14619 / CIP 102991 / JCM 1131 / KCTC 3163 / NCIMB 11718 / NCTC 13722 / AM63).